The sequence spans 258 residues: Regulatory protein RecX (258 aa).

The protein belongs to the RecX family.

It is found in the cytoplasm. Functionally, modulates RecA activity. The protein is Regulatory protein RecX of Streptococcus sanguinis (strain SK36).